Consider the following 164-residue polypeptide: Large ribosomal subunit protein uL15 (164 aa).

2 disordered regions span residues M1–G49 and E143–A164. Over residues R22–V36 the composition is skewed to gly residues.

This sequence belongs to the universal ribosomal protein uL15 family. As to quaternary structure, part of the 50S ribosomal subunit.

Functionally, binds to the 23S rRNA. The chain is Large ribosomal subunit protein uL15 from Phenylobacterium zucineum (strain HLK1).